The chain runs to 457 residues: MKKVFIKTFGCQMNEYDSDKMADVLNAAEGLVPTDTPEDADVILFNTCSVREKAQEKVFSDLGRVKALKARNPDLVVGVGGCVASQEGASIVARAPYVDVVFGPQTLHRLPELIDARRRTGRPQVDVSFPEIEKFDHLPPARVEGPSAFVSIMEGCSKYCSYCVVPYTRGEEVSRPFEDVLAEVAGLAEQGVREVTLLGQNVNAYIGKMGGTSERADFALLLEYVAEIPGIERIRYTTSHPKEFTARLIEAYATNRKLVDHLHLPVQHGSDRILMAMKRGYTVLEYKSIIRKLRAIRPDISIATDFIVGFPGETDADFAKTMDLVHEIGYDNSFSFIYSPRPGTPAANLHDDTPHAVKLERLKHLQATIDANMARISEGMVGSVQRILVEGPSRKDPSELHGRTENNRVVNFALPDLPQARRDQLVGQMLDVRIVHAYPHSLRGDVVEQRPDGVTQH.

In terms of domain architecture, MTTase N-terminal spans 2–119 (KKVFIKTFGC…LPELIDARRR (118 aa)). Residues cysteine 11, cysteine 48, cysteine 82, cysteine 156, cysteine 160, and cysteine 163 each contribute to the [4Fe-4S] cluster site. Residues 142–375 (RVEGPSAFVS…QATIDANMAR (234 aa)) form the Radical SAM core domain. In terms of domain architecture, TRAM spans 378 to 448 (EGMVGSVQRI…PHSLRGDVVE (71 aa)).

The protein belongs to the methylthiotransferase family. MiaB subfamily. Monomer. [4Fe-4S] cluster is required as a cofactor.

It localises to the cytoplasm. The enzyme catalyses N(6)-dimethylallyladenosine(37) in tRNA + (sulfur carrier)-SH + AH2 + 2 S-adenosyl-L-methionine = 2-methylsulfanyl-N(6)-dimethylallyladenosine(37) in tRNA + (sulfur carrier)-H + 5'-deoxyadenosine + L-methionine + A + S-adenosyl-L-homocysteine + 2 H(+). Catalyzes the methylthiolation of N6-(dimethylallyl)adenosine (i(6)A), leading to the formation of 2-methylthio-N6-(dimethylallyl)adenosine (ms(2)i(6)A) at position 37 in tRNAs that read codons beginning with uridine. The protein is tRNA-2-methylthio-N(6)-dimethylallyladenosine synthase of Ralstonia nicotianae (strain ATCC BAA-1114 / GMI1000) (Ralstonia solanacearum).